The primary structure comprises 258 residues: MQKLLLDPALRNWVLLPIMFVMILIGILRHNATILLQSSPKKLSKEEIREQRLLQRAYALRACSNSLLPESIEARKCFLIESLKSGKYLKPVDPNAPKAANPLMDDKTLEGLMESMKGNMLMVVPQTIIMTWINEFFSGFILLKLPFPLTLRFKSIFQSGVATQDLDVQWVSSISWYFLNLFGLKSVYALLLGENNAASNATNEMGMAGFSSAAATAQLIQPGQDISKMMLSEAENVQILKNESLLVDVEKRLLAQFA.

Helical transmembrane passes span 8-28 (PALR…IGIL), 123-143 (VVPQ…FILL), and 173-193 (SISW…LLLG).

Belongs to the EMC3 family.

The protein localises to the cytoplasm. It localises to the membrane. The protein is ER membrane protein complex subunit 3 of Schizosaccharomyces pombe (strain 972 / ATCC 24843) (Fission yeast).